A 245-amino-acid chain; its full sequence is MDGTRTSLDIEEYSDTEVQKNQVLTLEEWQDKWVNGKTAFHQEQGHQLLKKHLDTFLKGKSGLRVFFPLCGKAVEMKWFADRGHSVVGVEISELGIQEFFTEQNLSYSEEPITEIPGTKVFKSSSGNISLYCCSIFDLPRTNIGKFDMIWDRGALVAINPGDRKCYADTMLSLLGKKFQYLLCVLSYDPTKHPGPPFYVPHAEIERLFGKICNIRCLEKVDAFEERHKSWGIDCLFEKLYLLTEK.

The residue at position 14 (Ser-14) is a Phosphoserine. S-adenosyl-L-methionine is bound at residue Trp-29–Phe-40. A substrate-binding site is contributed by Phe-40. Residue Lys-58 is modified to N6-acetyllysine. Residues Leu-69, Glu-90, Ser-134–Ile-135, and Arg-152 each bind S-adenosyl-L-methionine.

It belongs to the class I-like SAM-binding methyltransferase superfamily. TPMT family. As to quaternary structure, monomer.

It localises to the cytoplasm. It carries out the reaction S-adenosyl-L-methionine + a thiopurine = S-adenosyl-L-homocysteine + a thiopurine S-methylether.. This Gorilla gorilla gorilla (Western lowland gorilla) protein is Thiopurine S-methyltransferase (TPMT).